The chain runs to 641 residues: Threonine--tRNA ligase (641 aa).

The TGS domain occupies 1 to 61 (MPIITLPDGT…TQNSHIQIIT (61 aa)). Positions 242-533 (DHRKLGKKYS…LIENYSGNFP (292 aa)) are catalytic. Zn(2+) contacts are provided by cysteine 333, histidine 384, and histidine 510.

It belongs to the class-II aminoacyl-tRNA synthetase family. As to quaternary structure, homodimer. The cofactor is Zn(2+).

It is found in the cytoplasm. It catalyses the reaction tRNA(Thr) + L-threonine + ATP = L-threonyl-tRNA(Thr) + AMP + diphosphate + H(+). Catalyzes the attachment of threonine to tRNA(Thr) in a two-step reaction: L-threonine is first activated by ATP to form Thr-AMP and then transferred to the acceptor end of tRNA(Thr). Also edits incorrectly charged L-seryl-tRNA(Thr). The protein is Threonine--tRNA ligase of Prochlorococcus marinus (strain NATL2A).